A 144-amino-acid chain; its full sequence is Transcription antitermination protein NusB (144 aa).

It belongs to the NusB family.

In terms of biological role, involved in transcription antitermination. Required for transcription of ribosomal RNA (rRNA) genes. Binds specifically to the boxA antiterminator sequence of the ribosomal RNA (rrn) operons. The protein is Transcription antitermination protein NusB of Blochmanniella pennsylvanica (strain BPEN).